The chain runs to 214 residues: Adenylate kinase (214 aa).

Residue 10 to 15 (GAGKGT) coordinates ATP. The NMP stretch occupies residues 30-59 (STGDMLRAAVKAGTPLGLEAKKVMDAGQLV). Residues Thr-31, Arg-36, 57 to 59 (QLV), 85 to 88 (GFPR), and Gln-92 contribute to the AMP site. An LID region spans residues 122 to 159 (GRRVHPGSGRVYHIVYNPPKVEGKDDVTGEDLAIRPDD). Residues Arg-123 and 132-133 (VY) contribute to the ATP site. Arg-156 and Arg-167 together coordinate AMP. Gln-200 provides a ligand contact to ATP.

The protein belongs to the adenylate kinase family. Monomer.

It is found in the cytoplasm. The catalysed reaction is AMP + ATP = 2 ADP. It participates in purine metabolism; AMP biosynthesis via salvage pathway; AMP from ADP: step 1/1. Functionally, catalyzes the reversible transfer of the terminal phosphate group between ATP and AMP. Plays an important role in cellular energy homeostasis and in adenine nucleotide metabolism. The protein is Adenylate kinase of Shewanella loihica (strain ATCC BAA-1088 / PV-4).